Here is a 611-residue protein sequence, read N- to C-terminus: MDKATMQDRQQHIRNFSIVAHIDHGKSTLADRILELTDTISKREMQDQVLDSMDLERERGITIKLNAVELHYQAKDGETYIFHLIDTPGHVDFTYEVSRSLAACEGAVLVVDAAQGVEAQTLANVYLAIDDDLEIVPVINKIDLPSAEPEKVRKEIEDDIGIDAEDAVLASAKAGIGIEDLLEQIVHKIPAPQGDLDAPLKALVFDSVYDDYRGVVLSVRIHEGIVRPGDRIRLMNSGSEYEVTEVGVNSPKPLARDYLMAGDVGYITASIKDIQDTRVGDTVTNAKNPAEKPLAGYREMNPMVYAGIYPTDNAKFTDLREALEKLKLNDAALEFEAESSQALGFGFRCGFLGLLHMDVIQERLEREFNLELITTAPSVTYHVRMTDGTEKKVENPAEMPEASAIKEIREPYVKAQIMVPNDYVGAVMELAQRKRGEFDTMEYLDSNRVNVVYHIPLSEIIFDFFDKLKSNTRGYASLDYDLDGYRASDLVKIDILLNGDQVDALSFIAHRDFAPARGREIAAKLKTIIPRQNFEIPVQATIGSKVIARTNIKAYRKDVTAHLYGGDRTRRMKLLEKQKAGKKRMKAVGKVEIPQEAFMAVLKTDEDEKPN.

Residues 11–193 enclose the tr-type G domain; it reads QHIRNFSIVA…QIVHKIPAPQ (183 aa). GTP contacts are provided by residues 23–28 and 140–143; these read DHGKST and NKID.

Belongs to the TRAFAC class translation factor GTPase superfamily. Classic translation factor GTPase family. LepA subfamily.

The protein resides in the cell membrane. It carries out the reaction GTP + H2O = GDP + phosphate + H(+). In terms of biological role, required for accurate and efficient protein synthesis under certain stress conditions. May act as a fidelity factor of the translation reaction, by catalyzing a one-codon backward translocation of tRNAs on improperly translocated ribosomes. Back-translocation proceeds from a post-translocation (POST) complex to a pre-translocation (PRE) complex, thus giving elongation factor G a second chance to translocate the tRNAs correctly. Binds to ribosomes in a GTP-dependent manner. The sequence is that of Elongation factor 4 1 from Lactiplantibacillus plantarum (strain ATCC BAA-793 / NCIMB 8826 / WCFS1) (Lactobacillus plantarum).